A 246-amino-acid chain; its full sequence is 1-(5-phosphoribosyl)-5-[(5-phosphoribosylamino)methylideneamino] imidazole-4-carboxamide isomerase (246 aa).

Asp8 serves as the catalytic Proton acceptor. The active-site Proton donor is Asp131.

It belongs to the HisA/HisF family.

It is found in the cytoplasm. It carries out the reaction 1-(5-phospho-beta-D-ribosyl)-5-[(5-phospho-beta-D-ribosylamino)methylideneamino]imidazole-4-carboxamide = 5-[(5-phospho-1-deoxy-D-ribulos-1-ylimino)methylamino]-1-(5-phospho-beta-D-ribosyl)imidazole-4-carboxamide. Its pathway is amino-acid biosynthesis; L-histidine biosynthesis; L-histidine from 5-phospho-alpha-D-ribose 1-diphosphate: step 4/9. This chain is 1-(5-phosphoribosyl)-5-[(5-phosphoribosylamino)methylideneamino] imidazole-4-carboxamide isomerase, found in Polaromonas naphthalenivorans (strain CJ2).